Reading from the N-terminus, the 822-residue chain is DNA gyrase subunit A (822 aa).

Residues 32-497 (LPDVRDGLKP…QVLSLEDEDL (466 aa)) enclose the Topo IIA-type catalytic domain. The active-site O-(5'-phospho-DNA)-tyrosine intermediate is the Y120. Positions 524-530 (QKRGGRG) match the GyrA-box motif.

This sequence belongs to the type II topoisomerase GyrA/ParC subunit family. In terms of assembly, heterotetramer, composed of two GyrA and two GyrB chains. In the heterotetramer, GyrA contains the active site tyrosine that forms a transient covalent intermediate with DNA, while GyrB binds cofactors and catalyzes ATP hydrolysis.

Its subcellular location is the cytoplasm. It catalyses the reaction ATP-dependent breakage, passage and rejoining of double-stranded DNA.. In terms of biological role, a type II topoisomerase that negatively supercoils closed circular double-stranded (ds) DNA in an ATP-dependent manner to modulate DNA topology and maintain chromosomes in an underwound state. Negative supercoiling favors strand separation, and DNA replication, transcription, recombination and repair, all of which involve strand separation. Also able to catalyze the interconversion of other topological isomers of dsDNA rings, including catenanes and knotted rings. Type II topoisomerases break and join 2 DNA strands simultaneously in an ATP-dependent manner. This chain is DNA gyrase subunit A, found in Streptococcus pneumoniae serotype 4 (strain ATCC BAA-334 / TIGR4).